The sequence spans 379 residues: Carbamoyl phosphate synthase small chain (379 aa).

Residues 1–189 form a CPSase region; that stretch reads MSKSALLVLE…GLPEAKADSE (189 aa). L-glutamine is bound by residues S47, G241, and G243. Positions 193–379 constitute a Glutamine amidotransferase type-1 domain; it reads HVVAYDFGAK…FIELIKQFRA (187 aa). Catalysis depends on C269, which acts as the Nucleophile. L-glutamine is bound by residues L270, Q273, N311, G313, and F314. Active-site residues include H353 and E355.

This sequence belongs to the CarA family. In terms of assembly, composed of two chains; the small (or glutamine) chain promotes the hydrolysis of glutamine to ammonia, which is used by the large (or ammonia) chain to synthesize carbamoyl phosphate. Tetramer of heterodimers (alpha,beta)4.

It catalyses the reaction hydrogencarbonate + L-glutamine + 2 ATP + H2O = carbamoyl phosphate + L-glutamate + 2 ADP + phosphate + 2 H(+). The catalysed reaction is L-glutamine + H2O = L-glutamate + NH4(+). The protein operates within amino-acid biosynthesis; L-arginine biosynthesis; carbamoyl phosphate from bicarbonate: step 1/1. Its pathway is pyrimidine metabolism; UMP biosynthesis via de novo pathway; (S)-dihydroorotate from bicarbonate: step 1/3. Its function is as follows. Small subunit of the glutamine-dependent carbamoyl phosphate synthetase (CPSase). CPSase catalyzes the formation of carbamoyl phosphate from the ammonia moiety of glutamine, carbonate, and phosphate donated by ATP, constituting the first step of 2 biosynthetic pathways, one leading to arginine and/or urea and the other to pyrimidine nucleotides. The small subunit (glutamine amidotransferase) binds and cleaves glutamine to supply the large subunit with the substrate ammonia. The chain is Carbamoyl phosphate synthase small chain from Vibrio cholerae serotype O1 (strain ATCC 39315 / El Tor Inaba N16961).